The primary structure comprises 412 residues: Argininosuccinate synthase (412 aa).

10–18 is a binding site for ATP; the sequence is AYSGGLDTS. Tyr89 contributes to the L-citrulline binding site. Position 119 (Gly119) interacts with ATP. The L-aspartate site is built by Thr121, Asn125, and Asp126. L-citrulline is bound at residue Asn125. L-citrulline-binding residues include Arg129, Ser177, Glu261, and Tyr273.

Belongs to the argininosuccinate synthase family. Type 1 subfamily. As to quaternary structure, homotetramer.

It localises to the cytoplasm. The enzyme catalyses L-citrulline + L-aspartate + ATP = 2-(N(omega)-L-arginino)succinate + AMP + diphosphate + H(+). It participates in amino-acid biosynthesis; L-arginine biosynthesis; L-arginine from L-ornithine and carbamoyl phosphate: step 2/3. The sequence is that of Argininosuccinate synthase from Bifidobacterium longum subsp. infantis (strain ATCC 15697 / DSM 20088 / JCM 1222 / NCTC 11817 / S12).